Reading from the N-terminus, the 189-residue chain is Peptidyl-tRNA hydrolase (189 aa).

Tyrosine 16 provides a ligand contact to tRNA. The Proton acceptor role is filled by histidine 21. 3 residues coordinate tRNA: phenylalanine 67, asparagine 69, and asparagine 115.

This sequence belongs to the PTH family. Monomer.

It localises to the cytoplasm. The enzyme catalyses an N-acyl-L-alpha-aminoacyl-tRNA + H2O = an N-acyl-L-amino acid + a tRNA + H(+). Functionally, hydrolyzes ribosome-free peptidyl-tRNAs (with 1 or more amino acids incorporated), which drop off the ribosome during protein synthesis, or as a result of ribosome stalling. Its function is as follows. Catalyzes the release of premature peptidyl moieties from peptidyl-tRNA molecules trapped in stalled 50S ribosomal subunits, and thus maintains levels of free tRNAs and 50S ribosomes. The protein is Peptidyl-tRNA hydrolase of Legionella pneumophila (strain Paris).